A 558-amino-acid chain; its full sequence is Tyrosine N-monooxygenase (558 aa).

Residues 13–33 form a helical membrane-spanning segment; the sequence is VLAAPLLSSSAILKLLLFVVT. The segment at 48-67 is disordered; sequence TTKCSSTTCASPPAGVGNPP. Low complexity predominate over residues 49–65; sequence TKCSSTTCASPPAGVGN. Heme b contacts are provided by Arg-138, Arg-167, His-422, Arg-491, and Cys-493.

This sequence belongs to the cytochrome P450 family. Requires heme b as cofactor.

It localises to the endoplasmic reticulum membrane. The enzyme catalyses L-tyrosine + 2 reduced [NADPH--hemoprotein reductase] + 2 O2 = (E)-4-hydroxyphenylacetaldehyde oxime + 2 oxidized [NADPH--hemoprotein reductase] + CO2 + 3 H2O + 2 H(+). It carries out the reaction L-tyrosine + reduced [NADPH--hemoprotein reductase] + O2 = N-hydroxy-L-tyrosine + oxidized [NADPH--hemoprotein reductase] + H2O + 2 H(+). It catalyses the reaction N-hydroxy-L-tyrosine + reduced [NADPH--hemoprotein reductase] + O2 = N,N-dihydroxy-L-tyrosine + oxidized [NADPH--hemoprotein reductase] + H2O + H(+). The catalysed reaction is N,N-dihydroxy-L-tyrosine + H(+) = (E)-4-hydroxyphenylacetaldehyde oxime + CO2 + H2O. It participates in secondary metabolite biosynthesis; dhurrin biosynthesis; dhurrin from L-tyrosine: step 1/3. Cytochrome P450 involved in the biosynthesis of the cyanogenic glucoside dhurrin. Catalyzes the conversion of L-tyrosine to p-hydroxyphenylacetaldehyde oxime, via the N-hydroxy-L-tyrosine and N,N-dihydroxy-L-tyrosine intermediates. Produces the (E) isomer of the final oxime product. This Sorghum bicolor (Sorghum) protein is Tyrosine N-monooxygenase (CYP79A1).